Here is a 388-residue protein sequence, read N- to C-terminus: Succinate--CoA ligase [ADP-forming] subunit beta (388 aa).

One can recognise an ATP-grasp domain in the interval 9–244 (KQLFARYGLP…PSQEDSREAH (236 aa)). Residues Lys46, 53–55 (GRG), Glu99, Thr102, and Glu107 each bind ATP. 2 residues coordinate Mg(2+): Asn199 and Asp213. Substrate contacts are provided by residues Asn264 and 321-323 (GIV).

It belongs to the succinate/malate CoA ligase beta subunit family. In terms of assembly, heterotetramer of two alpha and two beta subunits. Requires Mg(2+) as cofactor.

It catalyses the reaction succinate + ATP + CoA = succinyl-CoA + ADP + phosphate. It carries out the reaction GTP + succinate + CoA = succinyl-CoA + GDP + phosphate. It participates in carbohydrate metabolism; tricarboxylic acid cycle; succinate from succinyl-CoA (ligase route): step 1/1. In terms of biological role, succinyl-CoA synthetase functions in the citric acid cycle (TCA), coupling the hydrolysis of succinyl-CoA to the synthesis of either ATP or GTP and thus represents the only step of substrate-level phosphorylation in the TCA. The beta subunit provides nucleotide specificity of the enzyme and binds the substrate succinate, while the binding sites for coenzyme A and phosphate are found in the alpha subunit. This Pectobacterium carotovorum subsp. carotovorum (strain PC1) protein is Succinate--CoA ligase [ADP-forming] subunit beta.